We begin with the raw amino-acid sequence, 471 residues long: Metalloprotease TIKI homolog (471 aa).

The first 24 residues, 1–24, serve as a signal peptide directing secretion; that stretch reads MAAFTLWILVLNVFLLGFQARKLA. Over 25–449 the chain is Extracellular; it reads SNLKFPIQKC…SRKAAASCTP (425 aa). Residues Asn226, Asn235, Asn284, and Asn342 are each glycosylated (N-linked (GlcNAc...) asparagine). Positions 369-402 are enriched in basic residues; it reads KAKKSLNTRRERRKGCRGRRKKSKRCQKKKKRKR. The disordered stretch occupies residues 369 to 406; it reads KAKKSLNTRRERRKGCRGRRKKSKRCQKKKKRKRPDYS. A helical transmembrane segment spans residues 450–470; the sequence is IWTVSLALTCAVTCLLTYSGF. Position 471 (Arg471) is a topological domain, cytoplasmic.

The protein belongs to the TIKI family. It depends on Mn(2+) as a cofactor. Requires Co(2+) as cofactor.

The protein localises to the membrane. In terms of biological role, metalloprotease. The polypeptide is Metalloprotease TIKI homolog (Nematostella vectensis (Starlet sea anemone)).